The chain runs to 345 residues: Probable translocation protein y4yO (345 aa).

Residues 1–22 are compositionally biased toward basic and acidic residues; that stretch reads MSDTSEEKSHGATPKKLSDARK. The disordered stretch occupies residues 1–25; that stretch reads MSDTSEEKSHGATPKKLSDARKRGQ. A run of 3 helical transmembrane segments spans residues 87 to 107, 151 to 171, and 189 to 209; these read LATV…AALL, VLVL…TMVY, and QLIG…LLLQ.

Belongs to the type III secretion exporter family.

It is found in the cell membrane. Could be involved in the secretion of an unknown factor. The polypeptide is Probable translocation protein y4yO (Sinorhizobium fredii (strain NBRC 101917 / NGR234)).